Consider the following 142-residue polypeptide: Putative pre-16S rRNA nuclease (142 aa).

Belongs to the YqgF nuclease family.

The protein localises to the cytoplasm. Its function is as follows. Could be a nuclease involved in processing of the 5'-end of pre-16S rRNA. This chain is Putative pre-16S rRNA nuclease, found in Staphylococcus saprophyticus subsp. saprophyticus (strain ATCC 15305 / DSM 20229 / NCIMB 8711 / NCTC 7292 / S-41).